The primary structure comprises 685 residues: Translation initiation factor IF-2 (685 aa).

The interval 60–79 (ISLAKTREPSKEKTEAKKPP) is disordered. Positions 64–79 (KTREPSKEKTEAKKPP) are enriched in basic and acidic residues. Residues 175 to 352 (NRPPVVTVMG…DIRCIPDSPV (178 aa)) form the tr-type G domain. A G1 region spans residues 184–191 (GHVDHGKT). 184-191 (GHVDHGKT) is a GTP binding site. The segment at 209 to 213 (GITQS) is G2. The segment at 230–233 (DTPG) is G3. GTP contacts are provided by residues 230 to 234 (DTPGH) and 284 to 287 (NKID). The tract at residues 284-287 (NKID) is G4. The G5 stretch occupies residues 321–323 (SAR).

The protein belongs to the TRAFAC class translation factor GTPase superfamily. Classic translation factor GTPase family. IF-2 subfamily.

It localises to the cytoplasm. In terms of biological role, one of the essential components for the initiation of protein synthesis. Protects formylmethionyl-tRNA from spontaneous hydrolysis and promotes its binding to the 30S ribosomal subunits. Also involved in the hydrolysis of GTP during the formation of the 70S ribosomal complex. The protein is Translation initiation factor IF-2 of Fervidobacterium nodosum (strain ATCC 35602 / DSM 5306 / Rt17-B1).